Reading from the N-terminus, the 178-residue chain is Dual-action ribosomal maturation protein DarP (178 aa).

The protein belongs to the DarP family.

It localises to the cytoplasm. Functionally, member of a network of 50S ribosomal subunit biogenesis factors which assembles along the 30S-50S interface, preventing incorrect 23S rRNA structures from forming. Promotes peptidyl transferase center (PTC) maturation. The protein is Dual-action ribosomal maturation protein DarP of Mannheimia succiniciproducens (strain KCTC 0769BP / MBEL55E).